The chain runs to 427 residues: Enolase (427 aa).

Residue glutamine 163 coordinates (2R)-2-phosphoglycerate. Glutamate 205 (proton donor) is an active-site residue. Mg(2+)-binding residues include aspartate 242, glutamate 285, and aspartate 312. Lysine 337, arginine 366, serine 367, and lysine 388 together coordinate (2R)-2-phosphoglycerate. Lysine 337 (proton acceptor) is an active-site residue.

The protein belongs to the enolase family. Mg(2+) serves as cofactor.

Its subcellular location is the cytoplasm. It is found in the secreted. The protein localises to the cell surface. It catalyses the reaction (2R)-2-phosphoglycerate = phosphoenolpyruvate + H2O. Its pathway is carbohydrate degradation; glycolysis; pyruvate from D-glyceraldehyde 3-phosphate: step 4/5. Functionally, catalyzes the reversible conversion of 2-phosphoglycerate (2-PG) into phosphoenolpyruvate (PEP). It is essential for the degradation of carbohydrates via glycolysis. This Rhodopseudomonas palustris (strain BisB5) protein is Enolase.